The primary structure comprises 334 residues: uncharacterized protein (334 aa).

Helical transmembrane passes span 1 to 21 (MFRL…FTFI) and 46 to 66 (ILGL…IIII).

It is found in the cell membrane. This is an uncharacterized protein from Rickettsia prowazekii (strain Madrid E).